The following is a 197-amino-acid chain: Protein TIFY 9 (197 aa).

Over residues 57 to 73 (STGNNSDSSAKSRSVPS) the composition is skewed to polar residues. The tract at residues 57–84 (STGNNSDSSAKSRSVPSTPREDQPQIPI) is disordered. The 35-residue stretch at 98-132 (LVSGTVPMTIFYNGSVSVFQVSRNKAGEIMKVANE) folds into the Tify domain. A Jas motif is present at residues 168-193 (PIARRKSLQRFLEKRKERLVSTSPYY). The short motif at 170-177 (ARRKSLQR) is the Nuclear localization signal element.

It belongs to the TIFY/JAZ family. In terms of assembly, homo- and heterodimer. Interacts with MYC2, MYC3, MYC4, AFPH2/NINJA, TIFY10A/JAZ1, TIFY10B/JAZ2, TIFY6B/JAZ3, TIFY6A/JAZ4, TIFY11B/JAZ6, TIFY5A/JAZ8, TIFY7/JAZ9, TIFY3A/JAZ11 and TIFY3B/JAZ12. Isoform 1 and isoform 2 interact with COI1. Isoform 3 does not interact with COI1. Interacts with RHD6 and RSL1. Ubiquitinated. Targeted for degradation by the SCF(COI1) E3 ubiquitin ligase-proteasome pathway during jasmonate signaling.

Its subcellular location is the nucleus. Functionally, repressor of jasmonate (JA) responses that lacks the entire Jas domain and possesses severe JA insensitivity and resistance to JA-induced degradation. Acts as an endogenous repressor of JA signal output in JA-stimulated cells. Modulator of JA-controlled growth inhibition in response to wounding. Its function is as follows. Repressor of jasmonate (JA) responses that lacks part of the Jas domain and possesses JA insensitivity and partial resistance to JA-induced degradation. In terms of biological role, repressor of jasmonate (JA) responses. Interacts with and suppresses RHD6 and RSL1 transcription factor activities to negatively regulate jasmonate-stimulated root hair development. The polypeptide is Protein TIFY 9 (TIFY9) (Arabidopsis thaliana (Mouse-ear cress)).